Consider the following 217-residue polypeptide: Ribosome maturation factor RimM (217 aa).

The region spanning 115 to 186 (EDAWYDNQLV…TVTLTPPPGL (72 aa)) is the PRC barrel domain. The segment at 181–217 (TPPPGLFEDLPDDAPAAGDESEPVSPPVTAEETPGGE) is disordered.

The protein belongs to the RimM family. As to quaternary structure, binds ribosomal protein uS19.

The protein resides in the cytoplasm. An accessory protein needed during the final step in the assembly of 30S ribosomal subunit, possibly for assembly of the head region. Essential for efficient processing of 16S rRNA. May be needed both before and after RbfA during the maturation of 16S rRNA. It has affinity for free ribosomal 30S subunits but not for 70S ribosomes. This is Ribosome maturation factor RimM from Leifsonia xyli subsp. xyli (strain CTCB07).